We begin with the raw amino-acid sequence, 458 residues long: Kelch repeat and BTB domain-containing protein 13 (458 aa).

The region spanning 7-74 is the BTB domain; it reads TLVQVWVGGQ…LRGDRPALAA (68 aa). Kelch repeat units follow at residues 159–209, 210–258, 259–305, 307–350, and 352–400; these read AVST…TLGN, KLYI…GFDG, RLYA…QACG, LFVC…VAHR, and SLYV…VVRG.

As to quaternary structure, component of the BCR(KBTBD13) E3 ubiquitin ligase complex, at least composed of CUL3 and KBTBD13 and RBX1. Interacts with CUL3. In terms of processing, autoubiquitinated. In terms of tissue distribution, expressed in skeletal muscle.

It is found in the cytoplasm. The protein operates within protein modification; protein ubiquitination. Substrate-specific adapter of a BCR (BTB-CUL3-RBX1) E3 ubiquitin ligase complex. This is Kelch repeat and BTB domain-containing protein 13 (KBTBD13) from Homo sapiens (Human).